The following is a 512-amino-acid chain: FAD-dependent monooxygenase prx3 (512 aa).

The signal sequence occupies residues 1–19 (MLSLKAFLALSLSIHLSQG). Residues 63–235 (CQTTPTCVFA…TRFDLATFSV (173 aa)) enclose the FAD-binding PCMH-type domain. Pros-8alpha-FAD histidine is present on His100. Asn197, Asn281, Asn307, Asn329, Asn361, and Asn477 each carry an N-linked (GlcNAc...) asparagine glycan.

This sequence belongs to the oxygen-dependent FAD-linked oxidoreductase family.

Its pathway is sesquiterpene biosynthesis. Its function is as follows. FAD-dependent monooxygenase; part of the gene cluster that mediates the biosynthesis of PR-toxin, a bicyclic sesquiterpene belonging to the eremophilane class and acting as a mycotoxin. The first step of the pathway is catalyzed by the aristolochene synthase which performs the cyclization of trans,trans-farnesyl diphosphate (FPP) to the bicyclic sesquiterpene aristolochene. Following the formation of aristolochene, the non-oxygenated aristolochene is converted to the trioxygenated intermediate eremofortin B, via 7-epi-neopetasone. This conversion appears to involve three enzymes, a hydroxysterol oxidase-like enzyme, the quinone-oxidase prx3 that forms the quinone-type-structure in the bicyclic nucleus of aristolochene with the C8-oxo group and the C-3 hydroxyl group, and the P450 monooxygenase ORF6 that introduces the epoxide at the double bond between carbons 1 and 2. No monoxy or dioxy-intermediates have been reported to be released to the broth, so these three early oxidative reactions may be coupled together. Eremofortin B is further oxidized by another P450 monooxygenase, that introduces a second epoxide between carbons 7 and 11 prior to acetylation to eremofortin A by the acetyltransferase ORF8. The second epoxidation may be performed by a second P450 monooxygenase. After the acetylation step, eremofortin A is converted to eremofortin C and then to PR-toxin. First the conversion of eremofortin A to eremofortin C proceeds by oxidation of the side chain of the molecule at C-12 and is catalyzed by the short-chain oxidoreductase prx1. The cytochrome P450 monooxygenase ORF6 is probably also involved in this step. The primary alcohol formed at C-12 is finally oxidized by the short-chain alcohol dehydrogenase prx4 that forms PR-toxin. The protein is FAD-dependent monooxygenase prx3 of Penicillium roqueforti (strain FM164).